The chain runs to 334 residues: Phenazine-1-carboxylate N-methyltransferase (334 aa).

Residues Asp198 and Arg241 each contribute to the S-adenosyl-L-methionine site.

The protein belongs to the class I-like SAM-binding methyltransferase superfamily. Cation-independent O-methyltransferase family. Homodimer in solution. Probably interacts transiently with PhzS.

The catalysed reaction is phenazine-1-carboxylate + S-adenosyl-L-methionine = 5-methyl-phenazine-1-carboxylate + S-adenosyl-L-homocysteine. It functions in the pathway secondary metabolite biosynthesis; pyocyanine biosynthesis. In vitro, requires PhzS for activity. In terms of biological role, involved in the biosynthesis of pyocyanine, a blue-pigmented phenazine derivative, which plays a role in virulence. Converts phenazine-1-carboxylate (PCA) to 5-methylphenazine-1-carboxylate (5-methyl-PCA). This Pseudomonas aeruginosa (strain ATCC 15692 / DSM 22644 / CIP 104116 / JCM 14847 / LMG 12228 / 1C / PRS 101 / PAO1) protein is Phenazine-1-carboxylate N-methyltransferase.